Consider the following 309-residue polypeptide: Ribonuclease H2 subunit B (309 aa).

The residue at position 2 (Ala2) is an N-acetylalanine. An N6-acetyllysine modification is found at Lys295. Ser296 carries the phosphoserine modification.

The protein belongs to the RNase H2 subunit B family. The RNase H2 complex is a heterotrimer composed of the catalytic subunit RNASEH2A and the non-catalytic subunits RNASEH2B and RNASEH2C.

Its subcellular location is the nucleus. Functionally, non catalytic subunit of RNase H2, an endonuclease that specifically degrades the RNA of RNA:DNA hybrids. Participates in DNA replication, possibly by mediating the removal of lagging-strand Okazaki fragment RNA primers during DNA replication. Mediates the excision of single ribonucleotides from DNA:RNA duplexes. The sequence is that of Ribonuclease H2 subunit B (RNASEH2B) from Bos taurus (Bovine).